Here is a 302-residue protein sequence, read N- to C-terminus: UDP-3-O-acyl-N-acetylglucosamine deacetylase (302 aa).

Histidine 78, histidine 235, and aspartate 239 together coordinate Zn(2+). The active-site Proton donor is histidine 262.

This sequence belongs to the LpxC family. Requires Zn(2+) as cofactor.

The enzyme catalyses a UDP-3-O-[(3R)-3-hydroxyacyl]-N-acetyl-alpha-D-glucosamine + H2O = a UDP-3-O-[(3R)-3-hydroxyacyl]-alpha-D-glucosamine + acetate. The protein operates within glycolipid biosynthesis; lipid IV(A) biosynthesis; lipid IV(A) from (3R)-3-hydroxytetradecanoyl-[acyl-carrier-protein] and UDP-N-acetyl-alpha-D-glucosamine: step 2/6. Catalyzes the hydrolysis of UDP-3-O-myristoyl-N-acetylglucosamine to form UDP-3-O-myristoylglucosamine and acetate, the committed step in lipid A biosynthesis. The polypeptide is UDP-3-O-acyl-N-acetylglucosamine deacetylase (Bdellovibrio bacteriovorus (strain ATCC 15356 / DSM 50701 / NCIMB 9529 / HD100)).